We begin with the raw amino-acid sequence, 380 residues long: Cytochrome b (380 aa).

The next 4 membrane-spanning stretches (helical) occupy residues 34 to 54 (FGSLLGICLMTQILTGLLLAM), 78 to 99 (WLIRNLHANGASFFFICIYLHI), 114 to 134 (WNTGVILLLTLMATAFVGYVL), and 179 to 199 (FFALHFLLPFMIAGLTLVHLT). Heme b contacts are provided by H84 and H98. Heme b is bound by residues H183 and H197. H202 provides a ligand contact to a ubiquinone. Transmembrane regions (helical) follow at residues 227–247 (LKDILGFTLMLLPLTTLALFS), 289–309 (LGGVLALAASVLILFLAPFLH), 321–341 (LSQLLFWILVANLFILTWVGS), and 348–368 (FIIIGQLASFTYFTILLILFP).

The protein belongs to the cytochrome b family. As to quaternary structure, the cytochrome bc1 complex contains 11 subunits: 3 respiratory subunits (MT-CYB, CYC1 and UQCRFS1), 2 core proteins (UQCRC1 and UQCRC2) and 6 low-molecular weight proteins (UQCRH/QCR6, UQCRB/QCR7, UQCRQ/QCR8, UQCR10/QCR9, UQCR11/QCR10 and a cleavage product of UQCRFS1). This cytochrome bc1 complex then forms a dimer. It depends on heme b as a cofactor.

It localises to the mitochondrion inner membrane. Its function is as follows. Component of the ubiquinol-cytochrome c reductase complex (complex III or cytochrome b-c1 complex) that is part of the mitochondrial respiratory chain. The b-c1 complex mediates electron transfer from ubiquinol to cytochrome c. Contributes to the generation of a proton gradient across the mitochondrial membrane that is then used for ATP synthesis. The chain is Cytochrome b (MT-CYB) from Procellaria parkinsoni (Black petrel).